Here is a 118-residue protein sequence, read N- to C-terminus: Large ribosomal subunit protein uL18 (118 aa).

The segment at 1–26 (MISKPDKNKIRQKRHRRVRGKLSGTA) is disordered. Residues 10–20 (IRQKRHRRVRG) are compositionally biased toward basic residues.

The protein belongs to the universal ribosomal protein uL18 family. Part of the 50S ribosomal subunit; part of the 5S rRNA/L5/L18/L25 subcomplex. Contacts the 5S and 23S rRNAs.

Functionally, this is one of the proteins that bind and probably mediate the attachment of the 5S RNA into the large ribosomal subunit, where it forms part of the central protuberance. The chain is Large ribosomal subunit protein uL18 from Streptococcus equi subsp. zooepidemicus (strain H70).